A 102-amino-acid polypeptide reads, in one-letter code: Small ribosomal subunit protein uS10 (102 aa).

This sequence belongs to the universal ribosomal protein uS10 family. As to quaternary structure, part of the 30S ribosomal subunit.

Involved in the binding of tRNA to the ribosomes. The polypeptide is Small ribosomal subunit protein uS10 (Mycoplasma capricolum subsp. capricolum (strain California kid / ATCC 27343 / NCTC 10154)).